Reading from the N-terminus, the 875-residue chain is Valine--tRNA ligase (875 aa).

Residues 43–53 (PNVTGVLHMGH) carry the 'HIGH' region motif. Positions 534–538 (KMSKS) match the 'KMSKS' region motif. K537 serves as a coordination point for ATP. The stretch at 805–875 (GNLINTEEEL…LKESIAALKK (71 aa)) forms a coiled coil.

The protein belongs to the class-I aminoacyl-tRNA synthetase family. ValS type 1 subfamily. Monomer.

The protein localises to the cytoplasm. It catalyses the reaction tRNA(Val) + L-valine + ATP = L-valyl-tRNA(Val) + AMP + diphosphate. Functionally, catalyzes the attachment of valine to tRNA(Val). As ValRS can inadvertently accommodate and process structurally similar amino acids such as threonine, to avoid such errors, it has a 'posttransfer' editing activity that hydrolyzes mischarged Thr-tRNA(Val) in a tRNA-dependent manner. The polypeptide is Valine--tRNA ligase (Phocaeicola vulgatus (strain ATCC 8482 / DSM 1447 / JCM 5826 / CCUG 4940 / NBRC 14291 / NCTC 11154) (Bacteroides vulgatus)).